The chain runs to 375 residues: Tyrosine--tRNA ligase (375 aa).

L-tyrosine-binding residues include Y37, Y168, Q172, D175, and Q190. The 'KMSKS' region motif lies at 251–255; the sequence is KMSKS. Residue K254 participates in ATP binding.

This sequence belongs to the class-I aminoacyl-tRNA synthetase family. TyrS type 4 subfamily. Homodimer.

The protein resides in the cytoplasm. It carries out the reaction tRNA(Tyr) + L-tyrosine + ATP = L-tyrosyl-tRNA(Tyr) + AMP + diphosphate + H(+). Catalyzes the attachment of tyrosine to tRNA(Tyr) in a two-step reaction: tyrosine is first activated by ATP to form Tyr-AMP and then transferred to the acceptor end of tRNA(Tyr). In Thermococcus gammatolerans (strain DSM 15229 / JCM 11827 / EJ3), this protein is Tyrosine--tRNA ligase.